A 96-amino-acid chain; its full sequence is Protein transport protein Sec61 subunit beta (96 aa).

Polar residues predominate over residues Met1–Ser17. The segment at Met1 to Gly54 is disordered. An N-acetylproline modification is found at Pro2. Residues Pro2 to Val71 are Cytoplasmic-facing. Ser7 carries the phosphoserine modification. A Phosphothreonine modification is found at Thr9. Ser13, Ser14, and Ser17 each carry phosphoserine. A lipid anchor (S-palmitoyl cysteine) is attached at Cys39. A compositionally biased stretch (low complexity) spans Gly40–Ala50. A helical transmembrane segment spans residues Pro72 to Gly91. At Lys92–Ser96 the chain is on the lumenal side.

The protein belongs to the SEC61-beta family. In terms of assembly, the SEC61 channel-forming translocon complex consists of channel-forming core components SEC61A1, SEC61B and SEC61G and different auxiliary components such as SEC62 and SEC63. The SEC61 channel associates with the multi-pass translocon (MPT) complex. Interacts with TRAM1.

It is found in the endoplasmic reticulum membrane. In terms of biological role, component of SEC61 channel-forming translocon complex that mediates transport of signal peptide-containing precursor polypeptides across the endoplasmic reticulum (ER). Forms a ribosome receptor and a gated pore in the ER membrane, both functions required for cotranslational translocation of nascent polypeptides. The SEC61 channel is also involved in ER membrane insertion of transmembrane proteins: it mediates membrane insertion of the first few transmembrane segments of proteins, while insertion of subsequent transmembrane regions of multi-pass membrane proteins is mediated by the multi-pass translocon (MPT) complex. The SEC61 channel cooperates with the translocating protein TRAM1 to import nascent proteins into the ER. In Canis lupus familiaris (Dog), this protein is Protein transport protein Sec61 subunit beta (SEC61B).